The primary structure comprises 129 residues: Calcitonin gene-related peptide 2 (129 aa).

Positions 1–25 (MGFGKPSSFLAFSILVLCQAGSLQA) are cleaved as a signal peptide. Positions 26 to 81 (QPLRSSLESLPDPAALSEKEGRLLLAALVKAYVQRKTNELEQEQEQEMEGSSLTAQ) are excised as a propeptide. Cys85 and Cys90 are oxidised to a cystine. Phenylalanine amide is present on Phe120. Positions 126-129 (DLQA) are excised as a propeptide.

It belongs to the calcitonin family.

Its subcellular location is the secreted. Its function is as follows. CALCB/CGRP2 is a peptide hormone that induces vasodilation mediated by the CALCRL-RAMP1 receptor complex. Dilates a variety of vessels including the coronary, cerebral and systemic vasculature. Its abundance in the CNS also points toward a neurotransmitter or neuromodulator role. This Equus caballus (Horse) protein is Calcitonin gene-related peptide 2 (CALCB).